Here is a 190-residue protein sequence, read N- to C-terminus: Elongation factor P-like protein (190 aa).

The protein belongs to the elongation factor P family.

The chain is Elongation factor P-like protein from Yersinia enterocolitica serotype O:8 / biotype 1B (strain NCTC 13174 / 8081).